Reading from the N-terminus, the 801-residue chain is Triacylglycerol lipase SDP1L (801 aa).

N-linked (GlcNAc...) asparagine glycosylation is present at Asn130. Helical transmembrane passes span 232-249 (ALLL…LGVV) and 261-277 (IIAG…VVGT). Residues 233–436 (LLLSGGASLG…EMDLPMIQLK (204 aa)) form the PNPLA domain. A GXSXG motif is present at residues 264 to 268 (GSSVG). The active-site Nucleophile is Ser266. Residues Asn328 and Asn332 are each glycosylated (N-linked (GlcNAc...) asparagine). The active-site Proton acceptor is Asp423. N-linked (GlcNAc...) asparagine glycans are attached at residues Asn605, Asn620, Asn649, Asn653, Asn708, and Asn759. The tract at residues 648–675 (SNRTSNLSHTYDAGSECDSPEAEDWTRS) is disordered. The segment at 750-801 (MNSEPEDSQNESEIPETPESVQLDSPEKDIIDGESSASEDGDAQANLIHDHE) is disordered. Positions 753–765 (EPEDSQNESEIPE) are enriched in acidic residues.

As to expression, highly expressed in mature pollen.

It is found in the lipid droplet. The protein resides in the membrane. It catalyses the reaction a triacylglycerol + H2O = a diacylglycerol + a fatty acid + H(+). In terms of biological role, may be involved in the release of fatty acids from the oil body in germinating seedlings. Can hydrolyze triacylglycerols in vitro. The sequence is that of Triacylglycerol lipase SDP1L from Arabidopsis thaliana (Mouse-ear cress).